A 146-amino-acid polypeptide reads, in one-letter code: Hemoglobin subunit delta (146 aa).

The 145-residue stretch at His2–His146 folds into the Globin domain. His63 and His92 together coordinate heme b.

The protein belongs to the globin family. As to quaternary structure, heterotetramer of two delta chains and two alpha chains. As to expression, red blood cells.

The sequence is that of Hemoglobin subunit delta (HBD) from Ateles fusciceps (Brown-headed spider monkey).